We begin with the raw amino-acid sequence, 275 residues long: Penicillin-insensitive murein endopeptidase (275 aa).

The N-terminal stretch at 1-19 (MKNWIVGMVALVTMVPVMA) is a signal peptide. Intrachain disulfides connect Cys44–Cys264, Cys187–Cys235, and Cys216–Cys223. Positions 110, 113, 120, 147, and 211 each coordinate Zn(2+). The segment at 227 to 262 (DTPPPGDGCGAELESWFQPPPPSAKPGKTLPPPLPP) is disordered. Pro residues predominate over residues 244–262 (QPPPPSAKPGKTLPPPLPP).

This sequence belongs to the peptidase M74 family. Dimer. Requires Zn(2+) as cofactor.

The protein localises to the periplasm. In terms of biological role, murein endopeptidase that cleaves the D-alanyl-meso-2,6-diamino-pimelyl amide bond that connects peptidoglycan strands. Likely plays a role in the removal of murein from the sacculus. The protein is Penicillin-insensitive murein endopeptidase of Yersinia pestis.